A 131-amino-acid chain; its full sequence is Large ribosomal subunit protein bL20 (131 aa).

The protein belongs to the bacterial ribosomal protein bL20 family.

Functionally, binds directly to 23S ribosomal RNA and is necessary for the in vitro assembly process of the 50S ribosomal subunit. It is not involved in the protein synthesizing functions of that subunit. This chain is Large ribosomal subunit protein bL20, found in Mycolicibacterium paratuberculosis (strain ATCC BAA-968 / K-10) (Mycobacterium paratuberculosis).